A 241-amino-acid polypeptide reads, in one-letter code: Proteasome subunit alpha (241 aa).

The protein belongs to the peptidase T1A family. In terms of assembly, the 20S proteasome core is composed of 14 alpha and 14 beta subunits that assemble into four stacked heptameric rings, resulting in a barrel-shaped structure. The two inner rings, each composed of seven catalytic beta subunits, are sandwiched by two outer rings, each composed of seven alpha subunits. The catalytic chamber with the active sites is on the inside of the barrel. Has a gated structure, the ends of the cylinder being occluded by the N-termini of the alpha-subunits. Is capped by the proteasome-associated ATPase, ARC.

The protein resides in the cytoplasm. Its pathway is protein degradation; proteasomal Pup-dependent pathway. With respect to regulation, the formation of the proteasomal ATPase ARC-20S proteasome complex, likely via the docking of the C-termini of ARC into the intersubunit pockets in the alpha-rings, may trigger opening of the gate for substrate entry. Interconversion between the open-gate and close-gate conformations leads to a dynamic regulation of the 20S proteasome proteolysis activity. Component of the proteasome core, a large protease complex with broad specificity involved in protein degradation. This is Proteasome subunit alpha from Parafrankia sp. (strain EAN1pec).